We begin with the raw amino-acid sequence, 364 residues long: D-alanine--D-alanine ligase (364 aa).

Residues 146–352 (KLCAADAGVE…FDELISRLLL (207 aa)) form the ATP-grasp domain. 179-234 (TERFAFPVFVKPANLGSSVGISKVHNAAELRPALDKACALDAKVLVEETITGREVE) serves as a coordination point for ATP. Mg(2+) contacts are provided by Asp305, Glu319, and Asn321.

Belongs to the D-alanine--D-alanine ligase family. Mg(2+) serves as cofactor. Requires Mn(2+) as cofactor.

It is found in the cytoplasm. It catalyses the reaction 2 D-alanine + ATP = D-alanyl-D-alanine + ADP + phosphate + H(+). The protein operates within cell wall biogenesis; peptidoglycan biosynthesis. Its function is as follows. Cell wall formation. This Chlorobaculum parvum (strain DSM 263 / NCIMB 8327) (Chlorobium vibrioforme subsp. thiosulfatophilum) protein is D-alanine--D-alanine ligase.